Reading from the N-terminus, the 86-residue chain is Defensin-like SRCA-homolog protein (86 aa).

Residues 1-26 form the signal peptide; the sequence is MRCVVLFMVSCLLIVLLINHFEEVEA. Intrachain disulfides connect cysteine 32–cysteine 84, cysteine 42–cysteine 70, cysteine 52–cysteine 79, and cysteine 68–cysteine 81.

The protein belongs to the DEFL family.

The protein resides in the secreted. Functionally, involved in male-mediated self-incompatibility. In Arabidopsis lyrata (Lyre-leaved rock-cress), this protein is Defensin-like SRCA-homolog protein (SCR37).